The sequence spans 805 residues: Na(+)/H(+) antiporter subunit A1 (805 aa).

20 consecutive transmembrane segments (helical) span residues 1-21 (MSLLHIAVLLPLIFALIIPFV), 30-50 (LGWFVLPIPVVLFIYFLSYIS), 79-99 (LGLLFSLLITGIGCLIVLYSI), 117-137 (LFMGAMLGLVLSDNLIILYLF), 166-186 (MLVTVFGGLSLLGGIILLSIA), 201-221 (EIQTSPFFIFSMILVLIGAMT), 226-246 (FPFYVWLPDAMEAPTPVSAYL), 265-285 (IFAVSQGWIWTVTAVGLITLF), 300-320 (ILAFSTVSQLGMIMAMLGVGA), 337-357 (FTAAIFHLINHATFKGALFMI), 377-397 (LTIMPISFTITLITSLSMAGI), 427-447 (LGILIPITAIIGSVFTFVYSI), 480-500 (ILAILVIVFGLFPAILSGSII), 531-551 (LGIYIVGIVLIITFSYWIYLL), 591-611 (LVIIFASLIVIALVTLLVTPF), 623-643 (PFELIIVVLIITAASMIIFAK), 646-666 (LFSIIMASAVGYSVAIFFIFF), 671-691 (LALTQFVVESISTALFLLCFY), 707-727 (LVNIVISVGAGIVVTVLGLIA), and 766-786 (TLFESSVLGIAGLGVYTMIKL).

This sequence belongs to the CPA3 antiporters (TC 2.A.63) subunit A family. As to quaternary structure, may form a heterooligomeric complex that consists of seven subunits: mnhA1, mnhB1, mnhC1, mnhD1, mnhE1, mnhF1 and mnhG1.

Its subcellular location is the cell membrane. Mnh complex is a Na(+)/H(+) antiporter involved in Na(+) excretion. The chain is Na(+)/H(+) antiporter subunit A1 (mnhA1) from Staphylococcus saprophyticus subsp. saprophyticus (strain ATCC 15305 / DSM 20229 / NCIMB 8711 / NCTC 7292 / S-41).